The chain runs to 82 residues: Cytochrome b-c1 complex subunit 8 (82 aa).

The Mitochondrial matrix segment spans residues 1 to 39; sequence MGREFGNLTRMRHVITYSLSPFEQRAFPHYFSKGIPNVL. At K33 the chain carries N6-acetyllysine; alternate. N6-succinyllysine; alternate is present on K33. The helical transmembrane segment at 40–68 threads the bilayer; the sequence is RRMRACVLRVVPPFVAFYLVYTWGTQEFE. Over 69–82 the chain is Mitochondrial intermembrane; it reads NSKRKNPAAYENDK.

This sequence belongs to the UQCRQ/QCR8 family. In terms of assembly, component of the ubiquinol-cytochrome c oxidoreductase (cytochrome b-c1 complex, complex III, CIII), a multisubunit enzyme composed of 11 subunits. The complex is composed of 3 respiratory subunits cytochrome b, cytochrome c1 and Rieske protein UQCRFS1, 2 core protein subunits UQCRC1/QCR1 and UQCRC2/QCR2, and 6 low-molecular weight protein subunits UQCRH/QCR6, UQCRB/QCR7, UQCRQ/QCR8, UQCR10/QCR9, UQCR11/QCR10 and subunit 9, the cleavage product of Rieske protein UQCRFS1. The complex exists as an obligatory dimer and forms supercomplexes (SCs) in the inner mitochondrial membrane with NADH-ubiquinone oxidoreductase (complex I, CI) and cytochrome c oxidase (complex IV, CIV), resulting in different assemblies (supercomplex SCI(1)III(2)IV(1) and megacomplex MCI(2)III(2)IV(2)). Interacts with UQCC6.

It is found in the mitochondrion inner membrane. In terms of biological role, component of the ubiquinol-cytochrome c oxidoreductase, a multisubunit transmembrane complex that is part of the mitochondrial electron transport chain which drives oxidative phosphorylation. The respiratory chain contains 3 multisubunit complexes succinate dehydrogenase (complex II, CII), ubiquinol-cytochrome c oxidoreductase (cytochrome b-c1 complex, complex III, CIII) and cytochrome c oxidase (complex IV, CIV), that cooperate to transfer electrons derived from NADH and succinate to molecular oxygen, creating an electrochemical gradient over the inner membrane that drives transmembrane transport and the ATP synthase. The cytochrome b-c1 complex catalyzes electron transfer from ubiquinol to cytochrome c, linking this redox reaction to translocation of protons across the mitochondrial inner membrane, with protons being carried across the membrane as hydrogens on the quinol. In the process called Q cycle, 2 protons are consumed from the matrix, 4 protons are released into the intermembrane space and 2 electrons are passed to cytochrome c. This is Cytochrome b-c1 complex subunit 8 (UQCRQ) from Ailuropoda melanoleuca (Giant panda).